We begin with the raw amino-acid sequence, 380 residues long: DNA replication and repair protein RecF (380 aa).

30–37 (GQNGQGKT) provides a ligand contact to ATP.

It belongs to the RecF family.

The protein localises to the cytoplasm. Its function is as follows. The RecF protein is involved in DNA metabolism; it is required for DNA replication and normal SOS inducibility. RecF binds preferentially to single-stranded, linear DNA. It also seems to bind ATP. In Myxococcus xanthus (strain DK1622), this protein is DNA replication and repair protein RecF.